The following is a 171-amino-acid chain: NADH-quinone oxidoreductase subunit B (171 aa).

[4Fe-4S] cluster contacts are provided by Cys39, Cys40, Cys105, and Cys134.

The protein belongs to the complex I 20 kDa subunit family. As to quaternary structure, NDH-1 is composed of 14 different subunits. Subunits NuoB, C, D, E, F, and G constitute the peripheral sector of the complex. It depends on [4Fe-4S] cluster as a cofactor.

The protein localises to the cell inner membrane. The enzyme catalyses a quinone + NADH + 5 H(+)(in) = a quinol + NAD(+) + 4 H(+)(out). NDH-1 shuttles electrons from NADH, via FMN and iron-sulfur (Fe-S) centers, to quinones in the respiratory chain. The immediate electron acceptor for the enzyme in this species is believed to be ubiquinone. Couples the redox reaction to proton translocation (for every two electrons transferred, four hydrogen ions are translocated across the cytoplasmic membrane), and thus conserves the redox energy in a proton gradient. The polypeptide is NADH-quinone oxidoreductase subunit B (Aliarcobacter butzleri (strain RM4018) (Arcobacter butzleri)).